Here is a 359-residue protein sequence, read N- to C-terminus: Aminomethyltransferase (359 aa).

This sequence belongs to the GcvT family. The glycine cleavage system is composed of four proteins: P, T, L and H.

The catalysed reaction is N(6)-[(R)-S(8)-aminomethyldihydrolipoyl]-L-lysyl-[protein] + (6S)-5,6,7,8-tetrahydrofolate = N(6)-[(R)-dihydrolipoyl]-L-lysyl-[protein] + (6R)-5,10-methylene-5,6,7,8-tetrahydrofolate + NH4(+). Its function is as follows. The glycine cleavage system catalyzes the degradation of glycine. The sequence is that of Aminomethyltransferase from Synechococcus sp. (strain RCC307).